The sequence spans 432 residues: Amino-acid acetyltransferase (432 aa).

Residues 286–425 enclose the N-acetyltransferase domain; it reads ELVREAAIED…ASLYNFQRNS (140 aa).

The protein belongs to the acetyltransferase family. ArgA subfamily.

The protein resides in the cytoplasm. The catalysed reaction is L-glutamate + acetyl-CoA = N-acetyl-L-glutamate + CoA + H(+). The protein operates within amino-acid biosynthesis; L-arginine biosynthesis; N(2)-acetyl-L-ornithine from L-glutamate: step 1/4. This Pseudomonas syringae pv. tomato (strain ATCC BAA-871 / DC3000) protein is Amino-acid acetyltransferase.